The following is a 219-amino-acid chain: Ribose-5-phosphate isomerase A (219 aa).

Residues 28 to 31 (SGST), 81 to 84 (DGAD), and 94 to 97 (KGGG) each bind substrate. The active-site Proton acceptor is the Glu-103. Lys-121 is a substrate binding site.

It belongs to the ribose 5-phosphate isomerase family. In terms of assembly, homodimer.

The catalysed reaction is aldehydo-D-ribose 5-phosphate = D-ribulose 5-phosphate. It functions in the pathway carbohydrate degradation; pentose phosphate pathway; D-ribose 5-phosphate from D-ribulose 5-phosphate (non-oxidative stage): step 1/1. Functionally, catalyzes the reversible conversion of ribose-5-phosphate to ribulose 5-phosphate. The protein is Ribose-5-phosphate isomerase A of Haemophilus influenzae (strain 86-028NP).